Here is a 241-residue protein sequence, read N- to C-terminus: Uridylate kinase (241 aa).

12–15 (KLSG) lines the ATP pocket. The interval 20-25 (GATGYG) is involved in allosteric activation by GTP. Glycine 54 contributes to the UMP binding site. ATP-binding residues include glycine 55 and arginine 59. UMP is bound by residues aspartate 74 and 135–142 (TGNPYMTT). ATP-binding residues include asparagine 163, tyrosine 169, and aspartate 172.

It belongs to the UMP kinase family. Homohexamer.

The protein localises to the cytoplasm. It catalyses the reaction UMP + ATP = UDP + ADP. It functions in the pathway pyrimidine metabolism; CTP biosynthesis via de novo pathway; UDP from UMP (UMPK route): step 1/1. With respect to regulation, allosterically activated by GTP. Inhibited by UTP. In terms of biological role, catalyzes the reversible phosphorylation of UMP to UDP. This Dehalococcoides mccartyi (strain CBDB1) protein is Uridylate kinase.